The following is a 767-amino-acid chain: Ribonucleoside-diphosphate reductase large subunit (767 aa).

Substrate contacts are provided by residues Thr-176, 191 to 192 (SC), Gly-222, 392 to 396 (NLCAE), and 578 to 582 (PTAGT). Cys-192 and Cys-408 form a disulfide bridge. Asn-392 functions as the Proton acceptor in the catalytic mechanism. The active-site Cysteine radical intermediate is Cys-394. Glu-396 functions as the Proton acceptor in the catalytic mechanism.

This sequence belongs to the ribonucleoside diphosphate reductase large chain family. In terms of assembly, heterotetramer composed of a homodimer of the large subunit (R1) and a homodimer of the small subunit (R2). Larger multisubunit protein complex are also active, composed of (R1)n(R2)n.

The catalysed reaction is a 2'-deoxyribonucleoside 5'-diphosphate + [thioredoxin]-disulfide + H2O = a ribonucleoside 5'-diphosphate + [thioredoxin]-dithiol. In terms of biological role, ribonucleoside-diphosphate reductase holoenzyme provides the precursors necessary for viral DNA synthesis. Allows virus growth in non-dividing cells, as well as reactivation from latency in infected hosts. Catalyzes the biosynthesis of deoxyribonucleotides from the corresponding ribonucleotides. The chain is Ribonucleoside-diphosphate reductase large subunit from Saimiri sciureus (Common squirrel monkey).